A 407-amino-acid polypeptide reads, in one-letter code: 1-deoxy-D-xylulose 5-phosphate reductoisomerase (407 aa).

Residues threonine 25, glycine 26, serine 27, isoleucine 28, asparagine 53, and asparagine 136 each coordinate NADPH. Lysine 137 serves as a coordination point for 1-deoxy-D-xylulose 5-phosphate. Glutamate 138 is an NADPH binding site. Mn(2+) is bound at residue aspartate 162. 1-deoxy-D-xylulose 5-phosphate contacts are provided by serine 163, glutamate 164, serine 188, and histidine 211. Glutamate 164 lines the Mn(2+) pocket. An NADPH-binding site is contributed by glycine 217. 4 residues coordinate 1-deoxy-D-xylulose 5-phosphate: serine 224, asparagine 229, lysine 230, and glutamate 233. Position 233 (glutamate 233) interacts with Mn(2+).

It belongs to the DXR family. Mg(2+) is required as a cofactor. Mn(2+) serves as cofactor.

The catalysed reaction is 2-C-methyl-D-erythritol 4-phosphate + NADP(+) = 1-deoxy-D-xylulose 5-phosphate + NADPH + H(+). Its pathway is isoprenoid biosynthesis; isopentenyl diphosphate biosynthesis via DXP pathway; isopentenyl diphosphate from 1-deoxy-D-xylulose 5-phosphate: step 1/6. In terms of biological role, catalyzes the NADPH-dependent rearrangement and reduction of 1-deoxy-D-xylulose-5-phosphate (DXP) to 2-C-methyl-D-erythritol 4-phosphate (MEP). This chain is 1-deoxy-D-xylulose 5-phosphate reductoisomerase, found in Bradyrhizobium sp. (strain ORS 278).